A 141-amino-acid chain; its full sequence is Ribosome-binding factor A (141 aa).

A disordered region spans residues 120–141 (DEALRAQSAGARPAGDEDPYKP).

It belongs to the RbfA family. As to quaternary structure, monomer. Binds 30S ribosomal subunits, but not 50S ribosomal subunits or 70S ribosomes.

It is found in the cytoplasm. One of several proteins that assist in the late maturation steps of the functional core of the 30S ribosomal subunit. Associates with free 30S ribosomal subunits (but not with 30S subunits that are part of 70S ribosomes or polysomes). Required for efficient processing of 16S rRNA. May interact with the 5'-terminal helix region of 16S rRNA. This is Ribosome-binding factor A from Corynebacterium jeikeium (strain K411).